A 304-amino-acid polypeptide reads, in one-letter code: UDP-3-O-acyl-N-acetylglucosamine deacetylase (304 aa).

Histidine 79, histidine 238, and aspartate 242 together coordinate Zn(2+). The Proton donor role is filled by histidine 265.

This sequence belongs to the LpxC family. The cofactor is Zn(2+).

It carries out the reaction a UDP-3-O-[(3R)-3-hydroxyacyl]-N-acetyl-alpha-D-glucosamine + H2O = a UDP-3-O-[(3R)-3-hydroxyacyl]-alpha-D-glucosamine + acetate. It functions in the pathway glycolipid biosynthesis; lipid IV(A) biosynthesis; lipid IV(A) from (3R)-3-hydroxytetradecanoyl-[acyl-carrier-protein] and UDP-N-acetyl-alpha-D-glucosamine: step 2/6. Functionally, catalyzes the hydrolysis of UDP-3-O-myristoyl-N-acetylglucosamine to form UDP-3-O-myristoylglucosamine and acetate, the committed step in lipid A biosynthesis. In Pseudoalteromonas atlantica (strain T6c / ATCC BAA-1087), this protein is UDP-3-O-acyl-N-acetylglucosamine deacetylase.